Consider the following 439-residue polypeptide: Ribosomal protein uS12 methylthiotransferase RimO (439 aa).

Residues 2–114 (SKLYLMSLGC…IDEMILKKTN (113 aa)) enclose the MTTase N-terminal domain. [4Fe-4S] cluster is bound by residues Cys11, Cys45, Cys77, Cys146, Cys150, and Cys153. The region spanning 132–363 (TGSNSHAFIK…VDEVIEKSFE (232 aa)) is the Radical SAM core domain.

Belongs to the methylthiotransferase family. RimO subfamily. [4Fe-4S] cluster serves as cofactor.

The protein resides in the cytoplasm. It carries out the reaction L-aspartate(89)-[ribosomal protein uS12]-hydrogen + (sulfur carrier)-SH + AH2 + 2 S-adenosyl-L-methionine = 3-methylsulfanyl-L-aspartate(89)-[ribosomal protein uS12]-hydrogen + (sulfur carrier)-H + 5'-deoxyadenosine + L-methionine + A + S-adenosyl-L-homocysteine + 2 H(+). Catalyzes the methylthiolation of an aspartic acid residue of ribosomal protein uS12. This is Ribosomal protein uS12 methylthiotransferase RimO from Campylobacter jejuni subsp. jejuni serotype O:2 (strain ATCC 700819 / NCTC 11168).